The chain runs to 1349 residues: Protein strawberry notch homolog 2 (1349 aa).

Disordered stretches follow at residues 170-212 (YQSH…QHPD), 609-633 (STRR…PKAS), and 1319-1349 (PTET…FPNS). The segment covering 177–188 (EEEEGEEEEETE) has biased composition (acidic residues). Positions 609–631 (STRRRRDRGGGKRKRRPRGRGPK) are enriched in basic residues.

It belongs to the SBNO family. In terms of assembly, interacts with TAL1; this interaction inhibits TAL1 occupancy of the DCSTAMP promoter, leading to the activation of the DCSTAMP promoter by the transcription factor MITF. In terms of tissue distribution, expressed in the spleen and bone marrow, and to a lesser extent in the kidney, liver, brain, skin, heart and muscle. Expressed predominantly in osteoclasts, and to a lesser extent in T-cells, B-cells and osteoblasts. Expressed in macrophages.

In terms of biological role, acts as a transcriptional coregulator, that can have both coactivator and corepressor functions. Inhibits the DCSTAMP-repressive activity of TAL1, hence enhancing the access of the transcription factor MITF to the DC-STAMP promoter in osteoclast. Plays a role in bone homeostasis; required as a positive regulator in TNFSF11//RANKL-mediated osteoclast fusion via a DCSTAMP-dependent pathway. May also be required in the regulation of osteoblast differentiation. Involved in the transcriptional corepression of NF-kappaB in macrophages. Plays a role as a regulator in the pro-inflammatory cascade. The sequence is that of Protein strawberry notch homolog 2 (Sbno2) from Mus musculus (Mouse).